Reading from the N-terminus, the 197-residue chain is Xanthine phosphoribosyltransferase (197 aa).

Xanthine is bound by residues leucine 20 and asparagine 27. 128 to 132 (ANGQA) provides a ligand contact to 5-phospho-alpha-D-ribose 1-diphosphate. Residue lysine 156 participates in xanthine binding.

Belongs to the purine/pyrimidine phosphoribosyltransferase family. Xpt subfamily. Homodimer.

Its subcellular location is the cytoplasm. It catalyses the reaction XMP + diphosphate = xanthine + 5-phospho-alpha-D-ribose 1-diphosphate. Its pathway is purine metabolism; XMP biosynthesis via salvage pathway; XMP from xanthine: step 1/1. In terms of biological role, converts the preformed base xanthine, a product of nucleic acid breakdown, to xanthosine 5'-monophosphate (XMP), so it can be reused for RNA or DNA synthesis. This chain is Xanthine phosphoribosyltransferase, found in Bacillus cereus (strain ZK / E33L).